The following is a 940-amino-acid chain: Isoleucine--tRNA ligase (940 aa).

Residues 58–68 (PYANGSIHIGH) carry the 'HIGH' region motif. Glu564 contacts L-isoleucyl-5'-AMP. A 'KMSKS' region motif is present at residues 605-609 (KMSKS). Lys608 lines the ATP pocket. 4 residues coordinate Zn(2+): Cys903, Cys906, Cys923, and Cys926.

Belongs to the class-I aminoacyl-tRNA synthetase family. IleS type 1 subfamily. As to quaternary structure, monomer. Zn(2+) serves as cofactor.

It localises to the cytoplasm. It catalyses the reaction tRNA(Ile) + L-isoleucine + ATP = L-isoleucyl-tRNA(Ile) + AMP + diphosphate. In terms of biological role, catalyzes the attachment of isoleucine to tRNA(Ile). As IleRS can inadvertently accommodate and process structurally similar amino acids such as valine, to avoid such errors it has two additional distinct tRNA(Ile)-dependent editing activities. One activity is designated as 'pretransfer' editing and involves the hydrolysis of activated Val-AMP. The other activity is designated 'posttransfer' editing and involves deacylation of mischarged Val-tRNA(Ile). The polypeptide is Isoleucine--tRNA ligase (Shewanella putrefaciens (strain CN-32 / ATCC BAA-453)).